Reading from the N-terminus, the 436-residue chain is Bifunctional IPC transferase and DIPP synthase (436 aa).

The tract at residues 11 to 241 is mobA-like NTP transferase; it reads GVGAAVLAAG…LSEEMVLGWA (231 aa). Residues 17–19 and lysine 32 contribute to the CTP site; that span reads LAA. The interval 242–435 is CDP-alcohol phosphatidyltransferases; that stretch reads ASGNDGPVSR…RRLLALKRGR (194 aa). 3 helical membrane passes run 275–295, 349–371, and 397–417; these read VSLLSFALAALGAGLLAAGRL, AGTRLAAAAGYPALAGALLVSYT, and LAVLALGGLLGAPGAALLATG.

It in the N-terminal section; belongs to the MobA family. In the C-terminal section; belongs to the CDP-alcohol phosphatidyltransferase class-I family.

The protein resides in the membrane. The enzyme catalyses 1D-myo-inositol 3-phosphate + CTP + H(+) = CDP-1L-myo-inositol + diphosphate. It carries out the reaction CDP-1L-myo-inositol + 1D-myo-inositol 3-phosphate = bis(1L-myo-inositol) 3,1'-phosphate 1-phosphate + CMP + H(+). Involved in biosynthesis of di-myo-inositol phosphate (DIP), a widespread organic solute in microorganisms adapted to hot environments. Catalyzes the condensation of CTP and L-myo-inositol-1-phosphate into CDP-L-myo-inositol, as well as the biosynthesis of di-myo-inositol-1,3'-phosphate-1'-phosphate (DIPP) from CDP-L-myo-inositol and L-myo-inositol-1-phosphate. The protein is Bifunctional IPC transferase and DIPP synthase of Rubrobacter xylanophilus (strain DSM 9941 / JCM 11954 / NBRC 16129 / PRD-1).